The sequence spans 101 residues: Urease subunit beta (101 aa).

It belongs to the urease beta subunit family. In terms of assembly, heterotrimer of UreA (gamma), UreB (beta) and UreC (alpha) subunits. Three heterotrimers associate to form the active enzyme.

It is found in the cytoplasm. It catalyses the reaction urea + 2 H2O + H(+) = hydrogencarbonate + 2 NH4(+). Its pathway is nitrogen metabolism; urea degradation; CO(2) and NH(3) from urea (urease route): step 1/1. The protein is Urease subunit beta of Actinobacillus pleuropneumoniae serotype 7 (strain AP76).